The following is a 901-amino-acid chain: HTH-type transcriptional regulator MalT (901 aa).

Residue 39–46 (SPAGYGKT) participates in ATP binding. Residues 829–894 (ELIRTSPLTQ…DAVQHAQQLL (66 aa)) enclose the HTH luxR-type domain. The segment at residues 853-872 (NEQIAGELAVAATTIKTHIR) is a DNA-binding region (H-T-H motif).

The protein belongs to the MalT family. Monomer in solution. Oligomerizes to an active state in the presence of the positive effectors ATP and maltotriose.

Activated by ATP and maltotriose, which are both required for DNA binding. In terms of biological role, positively regulates the transcription of the maltose regulon whose gene products are responsible for uptake and catabolism of malto-oligosaccharides. Specifically binds to the promoter region of its target genes, recognizing a short DNA motif called the MalT box. This is HTH-type transcriptional regulator MalT from Salmonella choleraesuis (strain SC-B67).